A 144-amino-acid polypeptide reads, in one-letter code: Large ribosomal subunit protein uL15 (144 aa).

Residues 1–57 form a disordered region; that stretch reads MRLNTLSPAAGSKHAPKRVGRGIGSGLGKTGGRGHKGQKSRSGGKVRPGFEGGQMPL. Positions 21-31 are enriched in gly residues; it reads RGIGSGLGKTG. Residues 32–44 are compositionally biased toward basic residues; that stretch reads GRGHKGQKSRSGG.

Belongs to the universal ribosomal protein uL15 family. Part of the 50S ribosomal subunit.

Functionally, binds to the 23S rRNA. The sequence is that of Large ribosomal subunit protein uL15 from Vibrio vulnificus (strain CMCP6).